The chain runs to 614 residues: Probable ATP-dependent RNA helicase DDX5 (614 aa).

Basic and acidic residues predominate over residues 1–15 (MSGYSSDRDRGRDRG). A disordered region spans residues 1-39 (MSGYSSDRDRGRDRGFGAPRFGGSRAGPLSGKKFGNPGE). A Phosphoserine modification is found at S24. N6-acetyllysine; alternate is present on K32. K32 participates in a covalent cross-link: Glycyl lysine isopeptide (Lys-Gly) (interchain with G-Cter in SUMO2); alternate. 2 positions are modified to N6-acetyllysine: K33 and K40. Residue K45 forms a Glycyl lysine isopeptide (Lys-Gly) (interchain with G-Cter in SUMO2) linkage. K53 participates in a covalent cross-link: Glycyl lysine isopeptide (Lys-Gly) (interchain with G-Cter in SUMO2); alternate. K53 is covalently cross-linked (Glycyl lysine isopeptide (Lys-Gly) (interchain with G-Cter in SUMO); alternate). Residue K53 forms a Glycyl lysine isopeptide (Lys-Gly) (interchain with G-Cter in SUMO1); alternate linkage. Residues 94-122 (LNFYEANFPANVMDVIARQNFTEPTAIQA) carry the Q motif motif. Residues 114–116 (FTE), Q121, and 138–145 (AQTGSGKT) contribute to the ATP site. The Helicase ATP-binding domain maps to 125–300 (WPVALSGLDM…EDFLKDYIHI (176 aa)). Residue K236 is modified to N6-acetyllysine. The DEAD box motif lies at 248-251 (DEAD). Y297 is subject to Phosphotyrosine. Positions 328-475 (KLIRLMEEIM…AINPKLLQLV (148 aa)) constitute a Helicase C-terminal domain. Glycyl lysine isopeptide (Lys-Gly) (interchain with G-Cter in SUMO2) cross-links involve residues K340, K343, K388, K391, K411, K437, K451, and K470. The segment at 477–504 (DRGSGRSRGRGGMKDDRRDRYSAGKRGG) is disordered. The tract at residues 477 to 614 (DRGSGRSRGR…GYPMPTGYSQ (138 aa)) is transactivation domain. S480 bears the Phosphoserine mark. The segment covering 488-498 (GMKDDRRDRYS) has biased composition (basic and acidic residues). S520 bears the Phosphoserine mark. Residue K523 forms a Glycyl lysine isopeptide (Lys-Gly) (interchain with G-Cter in SUMO2) linkage.

This sequence belongs to the DEAD box helicase family. DDX5/DBP2 subfamily. As to quaternary structure, identified in the spliceosome C complex. Component of a ribonucleoprotein complex containing mRNAs and RNA-binding proteins including DDX5, HNRNPH2 and SRSF1 as well as splicing regulator ARVCF. Interacts with RBM4; the interaction occurs in an RNA-independent manner. Interacts with AGO1 and AGO2. Interacts with ESR1, AR, EP300, CREBBP, POLR2A, TP53, RUNX2 and HDAC1. Self-associates. Interacts with DDX17. Interacts with BRDT. The large PER complex involved in the repression of transcriptional termination is composed of at least PER2, CDK9, DDX5, DHX9, NCBP1 and POLR2A (active). Interacts with DHX36; this interaction occurs in a RNA-dependent manner. Interacts with NUPR1. Interacts with ERCC6. Interacts with DDX3X in the cytoplasm; this interaction may be more efficient when both proteins are unphosphorylated. In terms of processing, arg-502 is dimethylated, probably to asymmetric dimethylarginine. Sumoylated; sumoylation, promoted by PIAS1, promotes interaction with HDAC1 and transcriptional repression activity. Sumoylation also significantly increases stability, and reduces polyubiquitination. Post-translationally, polyubiquitinated, leading to proteasomal degradation. In terms of processing, weakly phosphorylated in the G1/S phase of the cell cycle and much more at G2/M, especially at Thr and Tyr residues.

It localises to the nucleus. The protein resides in the nucleolus. Its subcellular location is the nucleus speckle. The protein localises to the cytoplasm. It carries out the reaction ATP + H2O = ADP + phosphate + H(+). Its function is as follows. Involved in the alternative regulation of pre-mRNA splicing; its RNA helicase activity is necessary for increasing tau exon 10 inclusion and occurs in a RBM4-dependent manner. Binds to the tau pre-mRNA in the stem-loop region downstream of exon 10. The rate of ATP hydrolysis is highly stimulated by single-stranded RNA. Involved in transcriptional regulation; the function is independent of the RNA helicase activity. Transcriptional coactivator for androgen receptor AR but probably not ESR1. Synergizes with DDX17 and SRA1 RNA to activate MYOD1 transcriptional activity and involved in skeletal muscle differentiation. Transcriptional coactivator for p53/TP53 and involved in p53/TP53 transcriptional response to DNA damage and p53/TP53-dependent apoptosis. Transcriptional coactivator for RUNX2 and involved in regulation of osteoblast differentiation. Acts as a transcriptional repressor in a promoter-specific manner; the function probably involves association with histone deacetylases, such as HDAC1. As component of a large PER complex is involved in the inhibition of 3' transcriptional termination of circadian target genes such as PER1 and NR1D1 and the control of the circadian rhythms. This is Probable ATP-dependent RNA helicase DDX5 (DDX5) from Homo sapiens (Human).